We begin with the raw amino-acid sequence, 164 residues long: Peptidyl-prolyl cis-trans isomerase A (164 aa).

Met-1 is modified (N-acetylmethionine). Val-2 bears the N-acetylvaline; in Peptidyl-prolyl cis-trans isomerase A, N-terminally processed mark. Residues 7-163 (FFDISADGEP…KKITISDCGQ (157 aa)) form the PPIase cyclophilin-type domain. Lys-28 bears the N6-acetyllysine; alternate mark. Lys-28 participates in a covalent cross-link: Glycyl lysine isopeptide (Lys-Gly) (interchain with G-Cter in SUMO2); alternate. A Glycyl lysine isopeptide (Lys-Gly) (interchain with G-Cter in ubiquitin); alternate cross-link involves residue Lys-28. Lys-44 carries the post-translational modification N6-acetyllysine. A Phosphoserine modification is found at Ser-77. Lys-82 is subject to N6-acetyllysine; alternate. A Glycyl lysine isopeptide (Lys-Gly) (interchain with G-Cter in SUMO2); alternate cross-link involves residue Lys-82. A Phosphothreonine modification is found at Thr-93. An N-linked (GlcNAc...) asparagine glycan is attached at Asn-108. Residues Lys-125, Lys-131, and Lys-133 each carry the N6-acetyllysine modification.

Belongs to the cyclophilin-type PPIase family. PPIase A subfamily. Interacts with protein phosphatase PPP3CA/calcineurin A. Interacts with PRPF19 isoform 2 (via N-terminus). Interacts with isoform 2 of BSG/CD147. Interacts with FOXO1; the interaction promotes FOXO1 dephosphorylation, nuclear accumulation and transcriptional activity. Interacts with integrin ITGA2B:ITGB3; the interaction is ROS and peptidyl-prolyl cis-trans isomerase (PPIase) activity-dependent and is increased in the presence of thrombin. Interacts with MAP3K5. Interacts with TARDBP; the interaction is dependent on the RNA-binding activity of TARDBP and the PPIase activity of PPIA/CYPA and the acetylation of PPIA/CYPA at Lys-125 favors the interaction. Interacts with HNRNPA1, HNRNPA2B1, HNRNPC, RBMX, HNRNPK and HNRNPM. Post-translationally, acetylation at Lys-125 markedly inhibits catalysis of cis to trans isomerization. PPIA acetylation also antagonizes the immunosuppressive effects of cyclosporine by inhibiting the sequential steps of cyclosporine binding and calcineurin inhibition. Acetylation at Lys-125 favors the interaction with TARDBP.

It localises to the cytoplasm. The protein localises to the secreted. It is found in the nucleus. It catalyses the reaction [protein]-peptidylproline (omega=180) = [protein]-peptidylproline (omega=0). With respect to regulation, binds cyclosporin A (CsA). CsA mediates some of its effects via an inhibitory action on PPIase. Its function is as follows. Catalyzes the cis-trans isomerization of proline imidic peptide bonds in oligopeptides. Exerts a strong chemotactic effect on leukocytes partly through activation of one of its membrane receptors BSG/CD147, initiating a signaling cascade that culminates in MAPK/ERK activation. Activates endothelial cells (ECs) in a proinflammatory manner by stimulating activation of NF-kappa-B and ERK, JNK and p38 MAP-kinases and by inducing expression of adhesion molecules including SELE and VCAM1. Induces apoptosis in ECs by promoting the FOXO1-dependent expression of CCL2 and BCL2L11 which are involved in EC chemotaxis and apoptosis. In response to oxidative stress, initiates proapoptotic and antiapoptotic signaling in ECs via activation of NF-kappa-B and AKT1 and up-regulation of antiapoptotic protein BCL2. Negatively regulates MAP3K5/ASK1 kinase activity, autophosphorylation and oxidative stress-induced apoptosis mediated by MAP3K5/ASK1. Necessary for the assembly of TARDBP in heterogeneous nuclear ribonucleoprotein (hnRNP) complexes and regulates TARDBP binding to RNA UG repeats and TARDBP-dependent expression of HDAC6, ATG7 and VCP which are involved in clearance of protein aggregates. Plays an important role in platelet activation and aggregation. Regulates calcium mobilization and integrin ITGA2B:ITGB3 bidirectional signaling via increased ROS production as well as by facilitating the interaction between integrin and the cell cytoskeleton. Binds heparan sulfate glycosaminoglycans. The sequence is that of Peptidyl-prolyl cis-trans isomerase A (PPIA) from Cricetulus griseus (Chinese hamster).